We begin with the raw amino-acid sequence, 267 residues long: Tryptophan synthase alpha chain (267 aa).

Catalysis depends on proton acceptor residues glutamate 49 and aspartate 60.

It belongs to the TrpA family. In terms of assembly, tetramer of two alpha and two beta chains.

The enzyme catalyses (1S,2R)-1-C-(indol-3-yl)glycerol 3-phosphate + L-serine = D-glyceraldehyde 3-phosphate + L-tryptophan + H2O. The protein operates within amino-acid biosynthesis; L-tryptophan biosynthesis; L-tryptophan from chorismate: step 5/5. The alpha subunit is responsible for the aldol cleavage of indoleglycerol phosphate to indole and glyceraldehyde 3-phosphate. In Cyanothece sp. (strain PCC 7425 / ATCC 29141), this protein is Tryptophan synthase alpha chain.